The following is a 366-amino-acid chain: UDP-N-acetylglucosamine 2-epimerase (366 aa).

The active site involves H207.

This sequence belongs to the UDP-N-acetylglucosamine 2-epimerase family. In terms of assembly, homodimer.

It is found in the cytoplasm. The enzyme catalyses UDP-N-acetyl-alpha-D-glucosamine = UDP-N-acetyl-alpha-D-mannosamine. In terms of biological role, catalyzes the reversible epimerization at C-2 of UDP-N-acetylglucosamine (UDP-GlcNAc) to produce UDP-N-acetylmannosamine (UDP-ManNAc), the activated donor of ManNAc residues. The sequence is that of UDP-N-acetylglucosamine 2-epimerase (wecB) from Methanocaldococcus jannaschii (strain ATCC 43067 / DSM 2661 / JAL-1 / JCM 10045 / NBRC 100440) (Methanococcus jannaschii).